A 678-amino-acid polypeptide reads, in one-letter code: Photosystem I P700 chlorophyll a apoprotein A1 (678 aa).

A run of 8 helical transmembrane segments spans residues 75 to 98, 152 to 175, 192 to 216, 266 to 284, 302 to 325, 341 to 367, 384 to 406, and 458 to 476; these read VFAANLAHIGVAFIWLSGMHFHGA, LKVIAAFGLIASALCFLGSYFHMH, STHHLVGLLGLGSLAWAGHLIHISL, SAMHHFALALVLIVGSVLG, WHLVLGVQLFVTGTASVLYAQMSN, VSLFVHHMWIGGFFLVGAFAHLSIGLV, IILGHLTWVVAFLGVHSFGLYVH, and FMVTHIHAFTIHTTVLILV. [4Fe-4S] cluster is bound by residues C500 and C509. A run of 2 helical transmembrane segments spans residues 516 to 537 and 591 to 613; these read HVFLGLFWMYNSISVVIFHFFW and LAAYGLTFPASHFVWALSLMFLF. H602 contributes to the chlorophyll a' binding site. Chlorophyll a is bound by residues M610 and Y618. W619 contributes to the phylloquinone binding site. The chain crosses the membrane as a helical span at residues 651–671; it reads AVGFTHYLLGGIGSTWSFFLA.

The protein belongs to the PsaA/PsaB family. As to quaternary structure, the PsaA/B heterodimer binds the P700 chlorophyll special pair and subsequent electron acceptors. PSI consists of a core antenna complex that captures photons, and an electron transfer chain that converts photonic excitation into a charge separation. The eukaryotic PSI reaction center is composed of at least 11 subunits. Requires P700 is a chlorophyll a/chlorophyll a' dimer, A0 is one or more chlorophyll a, A1 is one or both phylloquinones and FX is a shared 4Fe-4S iron-sulfur center. as cofactor.

The protein resides in the plastid. The protein localises to the chloroplast thylakoid membrane. It carries out the reaction reduced [plastocyanin] + hnu + oxidized [2Fe-2S]-[ferredoxin] = oxidized [plastocyanin] + reduced [2Fe-2S]-[ferredoxin]. In terms of biological role, psaA and PsaB bind P700, the primary electron donor of photosystem I (PSI), as well as the electron acceptors A0, A1 and FX. PSI is a plastocyanin/cytochrome c6-ferredoxin oxidoreductase, converting photonic excitation into a charge separation, which transfers an electron from the donor P700 chlorophyll pair to the spectroscopically characterized acceptors A0, A1, FX, FA and FB in turn. Oxidized P700 is reduced on the lumenal side of the thylakoid membrane by plastocyanin or cytochrome c6. This chain is Photosystem I P700 chlorophyll a apoprotein A1, found in Amphidinium carterae (Dinoflagellate).